Here is a 127-residue protein sequence, read N- to C-terminus: Putative pre-16S rRNA nuclease (127 aa).

The protein belongs to the YqgF nuclease family.

It localises to the cytoplasm. Functionally, could be a nuclease involved in processing of the 5'-end of pre-16S rRNA. The chain is Putative pre-16S rRNA nuclease from Campylobacter jejuni subsp. jejuni serotype O:6 (strain 81116 / NCTC 11828).